The chain runs to 588 residues: L-fucose isomerase (588 aa).

Residues glutamate 335 and aspartate 359 each act as proton acceptor in the active site. Residues glutamate 335, aspartate 359, and histidine 525 each contribute to the Mn(2+) site.

The protein belongs to the L-fucose isomerase family. Mn(2+) serves as cofactor.

The protein localises to the cytoplasm. The enzyme catalyses L-fucose = L-fuculose. The protein operates within carbohydrate degradation; L-fucose degradation; L-lactaldehyde and glycerone phosphate from L-fucose: step 1/3. Functionally, converts the aldose L-fucose into the corresponding ketose L-fuculose. This is L-fucose isomerase from Streptococcus pneumoniae (strain JJA).